We begin with the raw amino-acid sequence, 199 residues long: Chaperone protein TorD (199 aa).

This sequence belongs to the TorD/DmsD family. TorD subfamily.

The protein localises to the cytoplasm. In terms of biological role, involved in the biogenesis of TorA. Acts on TorA before the insertion of the molybdenum cofactor and, as a result, probably favors a conformation of the apoenzyme that is competent for acquiring the cofactor. The sequence is that of Chaperone protein TorD from Escherichia coli O81 (strain ED1a).